A 160-amino-acid chain; its full sequence is Lymphocyte antigen 96 (160 aa).

The signal sequence occupies residues 1 to 16 (MLPFILFSTLLPLIFT). 3 disulfides stabilise this stretch: C25–C51, C37–C148, and C95–C105. N26, N77, and N101 each carry an N-linked (GlcNAc...) asparagine glycan. Positions 119-123 (FSFKG) are interaction with lipopolysaccharide. A glycan (N-linked (GlcNAc...) asparagine) is linked at N150.

In terms of assembly, heterogeneous homomer formed from homodimers; disulfide-linked. Belongs to the lipopolysaccharide (LPS) receptor, a multi-protein complex containing at least CD14, LY96 and TLR4. Binds to the extracellular domains of TLR2 and TLR4. Ligand binding induces interaction with TLR4 and oligomerization of the complex. Post-translationally, N-glycosylated.

The protein resides in the secreted. Its subcellular location is the extracellular space. Binds bacterial lipopolysaccharide (LPS). Cooperates with TLR4 in the innate immune response to bacterial lipopolysaccharide (LPS), and with TLR2 in the response to cell wall components from Gram-positive and Gram-negative bacteria. Enhances TLR4-dependent activation of NF-kappa-B. Cells expressing both LY96 and TLR4, but not TLR4 alone, respond to LPS. This is Lymphocyte antigen 96 (LY96) from Cricetulus griseus (Chinese hamster).